A 255-amino-acid polypeptide reads, in one-letter code: Ditrans,polycis-undecaprenyl-diphosphate synthase ((2E,6E)-farnesyl-diphosphate specific) (255 aa).

Aspartate 21 is a catalytic residue. Aspartate 21 serves as a coordination point for Mg(2+). Substrate contacts are provided by residues 22-25, tryptophan 26, arginine 34, histidine 38, and 66-68; these read GNGR and SSE. Asparagine 69 serves as the catalytic Proton acceptor. Residues tryptophan 70, arginine 72, arginine 189, and 195–197 contribute to the substrate site; that span reads RIS. Glutamate 208 provides a ligand contact to Mg(2+).

Belongs to the UPP synthase family. In terms of assembly, homodimer. Mg(2+) serves as cofactor.

The enzyme catalyses 8 isopentenyl diphosphate + (2E,6E)-farnesyl diphosphate = di-trans,octa-cis-undecaprenyl diphosphate + 8 diphosphate. Catalyzes the sequential condensation of isopentenyl diphosphate (IPP) with (2E,6E)-farnesyl diphosphate (E,E-FPP) to yield (2Z,6Z,10Z,14Z,18Z,22Z,26Z,30Z,34E,38E)-undecaprenyl diphosphate (di-trans,octa-cis-UPP). UPP is the precursor of glycosyl carrier lipid in the biosynthesis of bacterial cell wall polysaccharide components such as peptidoglycan and lipopolysaccharide. The protein is Ditrans,polycis-undecaprenyl-diphosphate synthase ((2E,6E)-farnesyl-diphosphate specific) of Xylella fastidiosa (strain 9a5c).